We begin with the raw amino-acid sequence, 549 residues long: FERM domain-containing protein 1 (549 aa).

A disordered region spans residues 1–40 (MAVPPRGRGIDPARTNPDTFPPSGARCMEPSPERPACSQQ). The FERM domain maps to 54-369 (RDVLVLLPSR…DELELDLASR (316 aa)). 2 disordered regions span residues 377-400 (SSQH…YTSG) and 422-464 (HGLH…GQSA). Positions 430–443 (SSSPRTSRSHPSTR) are enriched in low complexity. Polar residues predominate over residues 444 to 462 (GDSQATRQEPCTQVRTRGQ).

The chain is FERM domain-containing protein 1 (FRMD1) from Homo sapiens (Human).